Consider the following 412-residue polypeptide: MAALKYAGMEDTDSEDELPPGWEERSTKDGWVYYANHEEMKTQWEHPKTGKKKRCAGALPYGWEQETDDKGQIFYVDHINKRKTYFDPRQAFTVEDMQVKPKRYDGNTGALEILHGQDLSDKVIIVTGANSGIGFETARSFALHGAHVILACRNQSRASKAASLIMGEWSKARVEVLPLDLASLRSVRQFAELFKATKLPLHVLVCNAAVCSQPWRLTEDGFESTFQICHLGHFLLVQLLQDVLRLSAPARVVVVSSESHRFTDLLDSCGNLDLDLLSPPQKNYWSLLAYNRAKLCNLLFSSELHRRMSPHGICCNALHPGSMMFTSIHRSWWLLTLLFSLARPFTKSMQQGAATTVYCAVAPELEGIGGMYFNNCFRCLPSPQAQDPAAALSLWELSERLVQERSTPPQVL.

A disordered region spans residues methionine 1–glutamate 24. In terms of domain architecture, WW 1 spans aspartate 16–threonine 49. The Nuclear localization signal signature appears at glycine 50–cysteine 55. Positions glycine 57–glutamine 90 constitute a WW 2 domain. Glycine 128–glycine 134 contributes to the NADP(+) binding site. A substrate-binding site is contributed by serine 257. Tyrosine 290 serves as the catalytic Proton acceptor.

This sequence belongs to the short-chain dehydrogenases/reductases (SDR) family.

Its subcellular location is the cytoplasm. It is found in the mitochondrion. The protein localises to the golgi apparatus. It localises to the lysosome. Putative oxidoreductase. Acts as a tumor suppressor and plays a role in apoptosis. May function synergistically with p53/TP53 to control genotoxic stress-induced cell death. Plays a role in TGFB1 signaling and TGFB1-mediated cell death. May also play a role in tumor necrosis factor (TNF)-mediated cell death. Required for normal bone development. Inhibits Wnt signaling. This is WW domain-containing oxidoreductase (wwox) from Danio rerio (Zebrafish).